A 385-amino-acid chain; its full sequence is Acetate kinase (385 aa).

Mg(2+) is bound at residue Asn9. Lys16 contributes to the ATP binding site. Arg87 contacts substrate. Asp144 (proton donor/acceptor) is an active-site residue. ATP is bound by residues 202 to 206 and 277 to 279; these read HLGSG and DIR. Residue Glu373 coordinates Mg(2+).

It belongs to the acetokinase family. As to quaternary structure, homodimer. Requires Mg(2+) as cofactor. Mn(2+) serves as cofactor.

The protein resides in the cytoplasm. The catalysed reaction is acetate + ATP = acetyl phosphate + ADP. It participates in metabolic intermediate biosynthesis; acetyl-CoA biosynthesis; acetyl-CoA from acetate: step 1/2. Its function is as follows. Catalyzes the formation of acetyl phosphate from acetate and ATP. Can also catalyze the reverse reaction. This Rickettsia akari (strain Hartford) protein is Acetate kinase.